The primary structure comprises 180 residues: MSRLILDEQAIRRATTRIAHEIIERNKGVSDCLLVGIKTRGIYLANRLQERIETIEGIKLPVGEVDITLYRDDLTVKSTTEEPILQGTDVPVDVTGKKVILIDDVLYTGRTVRAALDALMDLGRPEQIQLAVLIDRGHRELPIRPDYVGKNVPTSKQEQIVAKLSEVDGIDEVTIEQKTS.

Substrate-binding positions include 39–40 (TR), 103–111 (DDVLYTGRT), and R136. Positions 99–111 (VILIDDVLYTGRT) match the PRPP-binding motif.

Belongs to the purine/pyrimidine phosphoribosyltransferase family. PyrR subfamily. In terms of assembly, homodimer and homohexamer; in equilibrium.

The catalysed reaction is UMP + diphosphate = 5-phospho-alpha-D-ribose 1-diphosphate + uracil. Functionally, regulates transcriptional attenuation of the pyrimidine nucleotide (pyr) operon by binding in a uridine-dependent manner to specific sites on pyr mRNA. This disrupts an antiterminator hairpin in the RNA and favors formation of a downstream transcription terminator, leading to a reduced expression of downstream genes. Its function is as follows. Also displays a weak uracil phosphoribosyltransferase activity which is not physiologically significant. The chain is Bifunctional protein PyrR from Halalkalibacterium halodurans (strain ATCC BAA-125 / DSM 18197 / FERM 7344 / JCM 9153 / C-125) (Bacillus halodurans).